The chain runs to 446 residues: Glucose-6-phosphate isomerase (446 aa).

Glu288 serves as the catalytic Proton donor. Catalysis depends on residues His309 and Lys423.

It belongs to the GPI family.

It localises to the cytoplasm. It carries out the reaction alpha-D-glucose 6-phosphate = beta-D-fructose 6-phosphate. It functions in the pathway carbohydrate biosynthesis; gluconeogenesis. Its pathway is carbohydrate degradation; glycolysis; D-glyceraldehyde 3-phosphate and glycerone phosphate from D-glucose: step 2/4. In terms of biological role, catalyzes the reversible isomerization of glucose-6-phosphate to fructose-6-phosphate. This chain is Glucose-6-phosphate isomerase, found in Lactobacillus delbrueckii subsp. bulgaricus (strain ATCC 11842 / DSM 20081 / BCRC 10696 / JCM 1002 / NBRC 13953 / NCIMB 11778 / NCTC 12712 / WDCM 00102 / Lb 14).